The chain runs to 404 residues: Lissencephaly-1 homolog (404 aa).

The region spanning 7-39 is the LisH domain; the sequence is QKEEINRAIAEYMQNNGYSESFSVFLKESSLSE. Residues 54–81 are a coiled coil; the sequence is TTVLRLQRKVNDLESKLQESQREINHGA. A compositionally biased stretch (basic and acidic residues) spans 69–89; sequence KLQESQREINHGAPTRDKRQA. Residues 69 to 90 are disordered; the sequence is KLQESQREINHGAPTRDKRQAA. WD repeat units lie at residues 104–145, 146–185, 189–228, 231–270, 273–327, 330–369, and 372–404; these read GHRL…RTLK, GHTD…DCLK, GHEH…CVYT, GHND…AKLV, DHEH…VLFT, AHEN…CMKA, and AHEH…WECR.

The protein belongs to the WD repeat LIS1/nudF family. As to quaternary structure, component of a dynein-regulating complex composed of at least lis-1 and nud-2. Interacts with nud-2; the interaction is direct. As to expression, expressed in all classes of neurons in the ventral cord. Expressed in the multinucleate spermathecal valves and adult seam cells.

Its subcellular location is the cytoplasm. The protein localises to the cytoskeleton. The protein resides in the microtubule organizing center. It localises to the centrosome. It is found in the chromosome. Its subcellular location is the centromere. The protein localises to the kinetochore. The protein resides in the nucleus envelope. Its function is as follows. Positively regulates the activity of the minus-end directed microtubule motor protein dynein. May enhance dynein-mediated microtubule sliding by targeting dynein to the microtubule plus end. Required for several dynein- and microtubule-dependent processes such as nuclear migration during cell division. Part of a complex with nud-2, which is recruited to the nuclear envelope by unc-83, where, in turn, it recruits dynein to the nuclear surface and regulates nuclear migration in hypodermal precursor cells. Plays a role in GABAergic synaptic vesicle localization in the ventral nerve cord. Required for neuronal cell differentiation. The sequence is that of Lissencephaly-1 homolog from Caenorhabditis elegans.